The primary structure comprises 419 residues: L-rhamnose isomerase (419 aa).

Mn(2+) is bound by residues His-262, Asp-294, and Asp-296.

The protein belongs to the rhamnose isomerase family. As to quaternary structure, homotetramer. Mn(2+) is required as a cofactor.

The protein resides in the cytoplasm. The catalysed reaction is L-rhamnopyranose = L-rhamnulose. It functions in the pathway carbohydrate degradation; L-rhamnose degradation; glycerone phosphate from L-rhamnose: step 1/3. In terms of biological role, catalyzes the interconversion of L-rhamnose and L-rhamnulose. This chain is L-rhamnose isomerase, found in Escherichia coli O6:H1 (strain CFT073 / ATCC 700928 / UPEC).